The primary structure comprises 92 residues: Small ribosomal subunit protein uS19 (92 aa).

It belongs to the universal ribosomal protein uS19 family.

In terms of biological role, protein S19 forms a complex with S13 that binds strongly to the 16S ribosomal RNA. This Trichormus variabilis (strain ATCC 29413 / PCC 7937) (Anabaena variabilis) protein is Small ribosomal subunit protein uS19.